A 645-amino-acid polypeptide reads, in one-letter code: Sister chromatid cohesion protein 1 (645 aa).

3 disordered regions span residues phenylalanine 292 to glutamate 311, glutamine 495 to glutamate 527, and cysteine 619 to valine 645.

It belongs to the rad21 family. As to quaternary structure, component of the cohesin complex, composed of the smc-1 and smc-3 heterodimer attached via their hinge domain, scc-1 which links them, and scc-3. Interacts with smc-1, smc-3, scc-3 and tim-1.

Its subcellular location is the nucleus. The protein resides in the chromosome. It is found in the cytoplasm. Its function is as follows. Cleavable component of the cohesin complex involved in chromosome cohesion during cell cycle. The cohesin complex is required for the cohesion of sister chromatids after DNA replication. The cohesin complex apparently forms a large proteinaceous ring within which sister chromatids can be trapped. At metaphase-anaphase transition, this protein is cleaved and dissociates from chromatin, allowing sister chromatids to segregate. In Caenorhabditis elegans, this protein is Sister chromatid cohesion protein 1.